The chain runs to 538 residues: Chaperonin GroEL (538 aa).

Residues 29–32 (TLGP), 86–90 (DGTTT), G413, 477–479 (NAA), and D493 each bind ATP.

The protein belongs to the chaperonin (HSP60) family. Forms a cylinder of 14 subunits composed of two heptameric rings stacked back-to-back. Interacts with the co-chaperonin GroES.

The protein resides in the cytoplasm. It carries out the reaction ATP + H2O + a folded polypeptide = ADP + phosphate + an unfolded polypeptide.. Its function is as follows. Together with its co-chaperonin GroES, plays an essential role in assisting protein folding. The GroEL-GroES system forms a nano-cage that allows encapsulation of the non-native substrate proteins and provides a physical environment optimized to promote and accelerate protein folding. The protein is Chaperonin GroEL of Bifidobacterium adolescentis (strain ATCC 15703 / DSM 20083 / NCTC 11814 / E194a).